Consider the following 165-residue polypeptide: Nucleotide-binding protein Syncc9902_1708 (165 aa).

This sequence belongs to the YajQ family.

Its function is as follows. Nucleotide-binding protein. The protein is Nucleotide-binding protein Syncc9902_1708 of Synechococcus sp. (strain CC9902).